The primary structure comprises 142 residues: Small ribosomal subunit protein uS12 (142 aa).

It belongs to the universal ribosomal protein uS12 family. In terms of assembly, part of the 30S ribosomal subunit.

In terms of biological role, with S4 and S5 plays an important role in translational accuracy. Located at the interface of the 30S and 50S subunits. The chain is Small ribosomal subunit protein uS12 from Methanococcoides burtonii (strain DSM 6242 / NBRC 107633 / OCM 468 / ACE-M).